The following is a 287-amino-acid chain: Nucleotide-binding protein VIBHAR_03667 (287 aa).

ATP is bound at residue 8 to 15 (GHSGAGKS). Residue 56-59 (DIRN) coordinates GTP.

It belongs to the RapZ-like family.

Functionally, displays ATPase and GTPase activities. The protein is Nucleotide-binding protein VIBHAR_03667 of Vibrio campbellii (strain ATCC BAA-1116).